Here is a 429-residue protein sequence, read N- to C-terminus: Enolase (429 aa).

Gln167 contributes to the (2R)-2-phosphoglycerate binding site. Glu209 (proton donor) is an active-site residue. Mg(2+) contacts are provided by Asp246, Glu289, and Asp316. Residues Lys341, Arg370, Ser371, and Lys392 each contribute to the (2R)-2-phosphoglycerate site. Lys341 (proton acceptor) is an active-site residue.

Belongs to the enolase family. In terms of assembly, component of the RNA degradosome, a multiprotein complex involved in RNA processing and mRNA degradation. Mg(2+) is required as a cofactor.

It localises to the cytoplasm. The protein resides in the secreted. Its subcellular location is the cell surface. It carries out the reaction (2R)-2-phosphoglycerate = phosphoenolpyruvate + H2O. It participates in carbohydrate degradation; glycolysis; pyruvate from D-glyceraldehyde 3-phosphate: step 4/5. Its function is as follows. Catalyzes the reversible conversion of 2-phosphoglycerate (2-PG) into phosphoenolpyruvate (PEP). It is essential for the degradation of carbohydrates via glycolysis. The sequence is that of Enolase from Cellvibrio japonicus (strain Ueda107) (Pseudomonas fluorescens subsp. cellulosa).